The primary structure comprises 129 residues: Cytochrome b5 (129 aa).

The 77-residue stretch at 8 to 84 (TTIYTHEEVA…LEKLYIGNLK (77 aa)) folds into the Cytochrome b5 heme-binding domain. H43 and H67 together coordinate heme. The helical transmembrane segment at 104–124 (GINFPLIAVGVFLAAFGVYYY) threads the bilayer.

This sequence belongs to the cytochrome b5 family.

It localises to the endoplasmic reticulum membrane. It is found in the microsome membrane. Functionally, membrane bound hemoprotein which function as an electron carrier for several membrane bound oxygenases. The protein is Cytochrome b5 (Cytb5) of Candida tropicalis (Yeast).